Consider the following 102-residue polypeptide: Protein PAPPAS (102 aa).

2 helical membrane passes run 13 to 33 (LFLT…FVKW) and 82 to 102 (IGSD…FFFF).

In terms of tissue distribution, expressed in placenta with lower expression in brain, kidney and testis.

The protein resides in the endoplasmic reticulum membrane. The protein is Protein PAPPAS (PAPPA-AS1) of Homo sapiens (Human).